The primary structure comprises 194 residues: Potassium-transporting ATPase KdpC subunit (194 aa).

The chain crosses the membrane as a helical span at residues 12 to 34 (LFLLLLTGGVYPLLTTALGQWWF).

The protein belongs to the KdpC family. As to quaternary structure, the system is composed of three essential subunits: KdpA, KdpB and KdpC.

The protein resides in the cell inner membrane. Part of the high-affinity ATP-driven potassium transport (or Kdp) system, which catalyzes the hydrolysis of ATP coupled with the electrogenic transport of potassium into the cytoplasm. This subunit acts as a catalytic chaperone that increases the ATP-binding affinity of the ATP-hydrolyzing subunit KdpB by the formation of a transient KdpB/KdpC/ATP ternary complex. The chain is Potassium-transporting ATPase KdpC subunit from Salmonella choleraesuis (strain SC-B67).